Reading from the N-terminus, the 164-residue chain is F-box protein At4g05010 (164 aa).

Residues 38–57 are disordered; the sequence is SKRAPENDSPPVKRPSHETT. The F-box domain occupies 61–109; sequence RSLLETLHQDILIRVLCHVDHEDLATLKRVSKTIRKAVIEAKKSHFDYS.

This is F-box protein At4g05010 from Arabidopsis thaliana (Mouse-ear cress).